A 192-amino-acid chain; its full sequence is Orotate phosphoribosyltransferase (192 aa).

116–124 (EDIVTTGLS) lines the 5-phospho-alpha-D-ribose 1-diphosphate pocket. Orotate contacts are provided by Thr-120 and Arg-148.

Belongs to the purine/pyrimidine phosphoribosyltransferase family. PyrE subfamily. As to quaternary structure, homodimer. The cofactor is Mg(2+).

It carries out the reaction orotidine 5'-phosphate + diphosphate = orotate + 5-phospho-alpha-D-ribose 1-diphosphate. The protein operates within pyrimidine metabolism; UMP biosynthesis via de novo pathway; UMP from orotate: step 1/2. Catalyzes the transfer of a ribosyl phosphate group from 5-phosphoribose 1-diphosphate to orotate, leading to the formation of orotidine monophosphate (OMP). This is Orotate phosphoribosyltransferase from Bartonella tribocorum (strain CIP 105476 / IBS 506).